We begin with the raw amino-acid sequence, 1162 residues long: Cartilage intermediate layer protein 2 (1162 aa).

Residues 1–20 form the signal peptide; the sequence is MASPLPLLYLCLAALHLAGA. The interval 23–51 is disordered; that stretch reads ATPTEEHTSTARGLQGRPPDTGQPSPALE. The 52-residue stretch at 146-197 folds into the TSP type-1 domain; the sequence is EAAWGAWGAWGLCSKSCGLGRRLRRRSCQSSSGDTCPGSPQEAQKCVRSRCP. 4 disulfide bridges follow: C158–C191, C162–C196, C173–C181, and C314–C360. The Ig-like C2-type domain occupies 293 to 377; that stretch reads PYLVKHPESR…TVRSRAALLT (85 aa). N330 carries an N-linked (GlcNAc...) asparagine glycan.

In terms of processing, may be cleaved into 2 chains possibly by a furin-like protease upon or preceding secretion. Post-translationally, N-glycosylated. Expressed in articulated and meniscal cartilage (at protein level). Also detected in heart, skeletal muscle and brain. Not detected in growth plate cartilage.

The protein localises to the secreted. It localises to the extracellular space. The protein resides in the extracellular matrix. In terms of biological role, may play a role in cartilage scaffolding. In Mus musculus (Mouse), this protein is Cartilage intermediate layer protein 2.